Consider the following 355-residue polypeptide: Tetraacyldisaccharide 4'-kinase (355 aa).

Residue 49 to 56 (SAGGTGKT) coordinates ATP.

Belongs to the LpxK family.

The catalysed reaction is a lipid A disaccharide + ATP = a lipid IVA + ADP + H(+). It functions in the pathway glycolipid biosynthesis; lipid IV(A) biosynthesis; lipid IV(A) from (3R)-3-hydroxytetradecanoyl-[acyl-carrier-protein] and UDP-N-acetyl-alpha-D-glucosamine: step 6/6. Functionally, transfers the gamma-phosphate of ATP to the 4'-position of a tetraacyldisaccharide 1-phosphate intermediate (termed DS-1-P) to form tetraacyldisaccharide 1,4'-bis-phosphate (lipid IVA). The chain is Tetraacyldisaccharide 4'-kinase from Chlorobium phaeobacteroides (strain DSM 266 / SMG 266 / 2430).